Consider the following 102-residue polypeptide: Guanyl-specific ribonuclease Pc (102 aa).

Cystine bridges form between C2–C10 and C6–C101. The active site involves H38. Residue E56 is the Proton acceptor of the active site. H90 functions as the Proton donor in the catalytic mechanism.

The protein belongs to the ribonuclease N1/T1 family.

It catalyses the reaction [RNA] containing guanosine + H2O = an [RNA fragment]-3'-guanosine-3'-phosphate + a 5'-hydroxy-ribonucleotide-3'-[RNA fragment].. The chain is Guanyl-specific ribonuclease Pc from Penicillium chrysogenum (Penicillium notatum).